A 134-amino-acid polypeptide reads, in one-letter code: Small ribosomal subunit protein uS11 (134 aa).

Disordered stretches follow at residues 1 to 24 and 115 to 134; these read MPPKSRAGAVKKVRRKEKKNVAHG and IQDVTPQPHNGCRPPKRRRV. Over residues 9-18 the composition is skewed to basic residues; the sequence is AVKKVRRKEK.

This sequence belongs to the universal ribosomal protein uS11 family. Part of the 30S ribosomal subunit. Interacts with proteins S7 and S18. Binds to IF-3.

In terms of biological role, located on the platform of the 30S subunit, it bridges several disparate RNA helices of the 16S rRNA. Forms part of the Shine-Dalgarno cleft in the 70S ribosome. The chain is Small ribosomal subunit protein uS11 from Saccharopolyspora erythraea (strain ATCC 11635 / DSM 40517 / JCM 4748 / NBRC 13426 / NCIMB 8594 / NRRL 2338).